The following is a 211-amino-acid chain: Transcriptional regulator NarO (211 aa).

Positions 154–205 (LTARQREVLETAHEMGYFEHPREANATEVAAALDINRSTFTEHLSAAQSKLL) constitute an HTH bat-type domain.

Its function is as follows. Activates transcription of the denitrifying genes (nitrate reductase narA and nitrite reductase nirK) under anaerobic conditions. The sequence is that of Transcriptional regulator NarO from Haloferax volcanii (strain ATCC 29605 / DSM 3757 / JCM 8879 / NBRC 14742 / NCIMB 2012 / VKM B-1768 / DS2) (Halobacterium volcanii).